Consider the following 346-residue polypeptide: Annexin A1 (346 aa).

N-acetylalanine is present on Ala2. At Ser5 the chain carries Phosphoserine; by TRPM7. Gln19 is covalently cross-linked (Isoglutamyl lysine isopeptide (Gln-Lys) (interchain with K-?)). A Phosphotyrosine; by EGFR modification is found at Tyr21. Position 27 is a phosphoserine; by PKC (Ser27). Residues Ser34 and Ser37 each carry the phosphoserine modification. Residue Thr41 is modified to Phosphothreonine. Annexin repeat units follow at residues 42-113 (FNPS…ALLK), 114-185 (TPAQ…SLAK), 197-269 (DLAD…AIVK), and 273-344 (SKPA…ALCG). Position 58 is an N6-acetyllysine (Lys58). Gly59, Val60, Glu62, Lys97, Leu100, Glu105, Met127, Gly129, Gly131, Thr132, and Glu134 together coordinate Ca(2+). At Thr136 the chain carries Phosphothreonine. 3 residues coordinate Ca(2+): Asp171, Gly210, and Arg213. A Glycyl lysine isopeptide (Lys-Gly) (interchain with G-Cter in SUMO1); alternate cross-link involves residue Lys214. Lys214 is covalently cross-linked (Glycyl lysine isopeptide (Lys-Gly) (interchain with G-Cter in SUMO2); alternate). Gly215 contributes to the Ca(2+) binding site. Lys239 is subject to N6-acetyllysine. Ca(2+)-binding residues include Asp253, Glu255, and Leu256. Residue Lys257 forms a Glycyl lysine isopeptide (Lys-Gly) (interchain with G-Cter in SUMO1) linkage. Residues Glu261, Met286, Gly288, and Gly290 each contribute to the Ca(2+) site. Lys312 carries the N6-acetyllysine modification. Cys324 and Cys343 are joined by a disulfide. Positions 328, 330, and 331 each coordinate Ca(2+). A Glycyl lysine isopeptide (Lys-Gly) (interchain with G-Cter in SUMO1) cross-link involves residue Lys332. Residue Glu336 participates in Ca(2+) binding.

It belongs to the annexin family. As to quaternary structure, homodimer; non-covalently linked. Homodimer; linked by transglutamylation. Homodimers linked by transglutamylation are observed in placenta, but not in other tissues. Interacts with S100A11. Heterotetramer, formed by two molecules each of S100A11 and ANXA1. Interacts with DYSF. Interacts with EGFR. Phosphorylated by protein kinase C, EGFR and TRPM7. Phosphorylated in response to EGF treatment. In terms of processing, sumoylated. Post-translationally, proteolytically cleaved by cathepsin CTSG to release the active N-terminal peptide Ac2-26. In terms of tissue distribution, detected in resting neutrophils. Detected in peripheral blood T-cells. Detected in extracellular vesicles in blood serum from patients with inflammatory bowel disease, but not in serum from healthy donors. Detected in placenta (at protein level). Detected in liver.

It localises to the nucleus. Its subcellular location is the cytoplasm. The protein localises to the cell projection. The protein resides in the cilium. It is found in the cell membrane. It localises to the membrane. Its subcellular location is the endosome membrane. The protein localises to the basolateral cell membrane. The protein resides in the apical cell membrane. It is found in the lateral cell membrane. It localises to the secreted. Its subcellular location is the extracellular space. The protein localises to the extracellular exosome. The protein resides in the cytoplasmic vesicle. It is found in the secretory vesicle lumen. It localises to the phagocytic cup. Its subcellular location is the early endosome. The protein localises to the cytoplasmic vesicle membrane. Its function is as follows. Plays important roles in the innate immune response as effector of glucocorticoid-mediated responses and regulator of the inflammatory process. Has anti-inflammatory activity. Plays a role in glucocorticoid-mediated down-regulation of the early phase of the inflammatory response. Contributes to the adaptive immune response by enhancing signaling cascades that are triggered by T-cell activation, regulates differentiation and proliferation of activated T-cells. Promotes the differentiation of T-cells into Th1 cells and negatively regulates differentiation into Th2 cells. Has no effect on unstimulated T cells. Negatively regulates hormone exocytosis via activation of the formyl peptide receptors and reorganization of the actin cytoskeleton. Has high affinity for Ca(2+) and can bind up to eight Ca(2+) ions. Displays Ca(2+)-dependent binding to phospholipid membranes. Plays a role in the formation of phagocytic cups and phagosomes. Plays a role in phagocytosis by mediating the Ca(2+)-dependent interaction between phagosomes and the actin cytoskeleton. Functions at least in part by activating the formyl peptide receptors and downstream signaling cascades. Promotes chemotaxis of granulocytes and monocytes via activation of the formyl peptide receptors. Promotes rearrangement of the actin cytoskeleton, cell polarization and cell migration. Promotes resolution of inflammation and wound healing. Acts via neutrophil N-formyl peptide receptors to enhance the release of CXCL2. In Homo sapiens (Human), this protein is Annexin A1 (ANXA1).